A 65-amino-acid polypeptide reads, in one-letter code: Large ribosomal subunit protein bL35 (65 aa).

The protein belongs to the bacterial ribosomal protein bL35 family.

In Ruminiclostridium cellulolyticum (strain ATCC 35319 / DSM 5812 / JCM 6584 / H10) (Clostridium cellulolyticum), this protein is Large ribosomal subunit protein bL35.